The sequence spans 101 residues: MPSQLRVAVLAAFLLSAVLCEGMVVTKLVSELRCQCIKIHTTPFHPKFIKELKVIESGPRCANSEIIVKLSDNRQLCLDPKKKWVQDVVSMFLKRTESQDS.

A signal peptide spans 1 to 22 (MPSQLRVAVLAAFLLSAVLCEG). Intrachain disulfides connect Cys34/Cys61 and Cys36/Cys77.

This sequence belongs to the intercrine alpha (chemokine CxC) family. In terms of assembly, homodimer. Interacts with TNFAIP6 (via Link domain); this interaction interferes with chemokine binding to glycosaminoglycans.

The protein resides in the secreted. Its function is as follows. Chemotactic factor that mediates inflammatory response by attracting neutrophils, basophils, and T-cells to clear pathogens and protect the host from infection. Also plays an important role in neutrophil activation. Released in response to an inflammatory stimulus, exerts its effect by binding to the G-protein-coupled receptors CXCR1 and CXCR2, primarily found in neutrophils, monocytes and endothelial cells. G-protein heterotrimer (alpha, beta, gamma subunits) constitutively binds to CXCR1/CXCR2 receptor and activation by IL8 leads to beta and gamma subunits release from Galpha (GNAI2 in neutrophils) and activation of several downstream signaling pathways including PI3K and MAPK pathways. The sequence is that of Interleukin-8 (CXCL8) from Cavia porcellus (Guinea pig).